The sequence spans 418 residues: Thermolabile hemolysin (418 aa).

The N-terminal stretch at 1–19 is a signal peptide; sequence MMKKTITLLTALLPLASAV. The active-site Nucleophile is the S153. Catalysis depends on residues D390 and H393.

This sequence belongs to the 'GDSL' lipolytic enzyme family. There are two forms of LDH. The LDH(S) may be a protein in which 13 residues of the N-terminal of LDH(L) are deleted.

The protein localises to the secreted. Functionally, phospholipase hydrolyzing both fatty acid esters of phospholipid, i.e. it hydrolyzes phosphatidylcholine (PC) to lysophosphatidylcholine (LPC) and then LPC to glycerophosphorylcholine (GPC). This chain is Thermolabile hemolysin, found in Vibrio parahaemolyticus serotype O3:K6 (strain RIMD 2210633).